An 89-amino-acid chain; its full sequence is MAISKEKKNEIIKQYARHDGDTGSVEVQVAVLTWEINHLNEHIKQHKKDHATYRGLMKKIGHRRNLLAYLRRTDVNRYRDLISSLGLRR.

It belongs to the universal ribosomal protein uS15 family. Part of the 30S ribosomal subunit. Forms a bridge to the 50S subunit in the 70S ribosome, contacting the 23S rRNA.

Functionally, one of the primary rRNA binding proteins, it binds directly to 16S rRNA where it helps nucleate assembly of the platform of the 30S subunit by binding and bridging several RNA helices of the 16S rRNA. In terms of biological role, forms an intersubunit bridge (bridge B4) with the 23S rRNA of the 50S subunit in the ribosome. The chain is Small ribosomal subunit protein uS15 from Streptococcus mutans serotype c (strain ATCC 700610 / UA159).